A 103-amino-acid polypeptide reads, in one-letter code: Matrix Gla protein (103 aa).

Positions 1–19 (MKSLLLLSVLAALAVAALC) are cleaved as a signal peptide. 4-carboxyglutamate is present on glutamate 21. Residues serine 22, serine 25, and serine 28 each carry the phosphoserine modification. The Gla domain maps to 51-97 (RAKAQERIRELNKPPYELNREACDDYKLCERYAMVYGYNAAYNRYFR). A 4-carboxyglutamate mark is found at glutamate 56, glutamate 60, glutamate 67, and glutamate 71. Cysteine 73 and cysteine 79 are joined by a disulfide.

It belongs to the osteocalcin/matrix Gla protein family. Post-translationally, requires vitamin K-dependent gamma-carboxylation for its function.

It is found in the secreted. Functionally, associates with the organic matrix of bone and cartilage. Thought to act as an inhibitor of bone formation. The chain is Matrix Gla protein (MGP) from Sus scrofa (Pig).